A 233-amino-acid polypeptide reads, in one-letter code: Glucosamine-6-phosphate deaminase (233 aa).

Catalysis depends on D62, which acts as the Proton acceptor; for enolization step. N128 functions as the For ring-opening step in the catalytic mechanism. H130 acts as the Proton acceptor; for ring-opening step in catalysis. Residue E135 is the For ring-opening step of the active site.

This sequence belongs to the glucosamine/galactosamine-6-phosphate isomerase family. NagB subfamily.

The enzyme catalyses alpha-D-glucosamine 6-phosphate + H2O = beta-D-fructose 6-phosphate + NH4(+). It functions in the pathway amino-sugar metabolism; N-acetylneuraminate degradation; D-fructose 6-phosphate from N-acetylneuraminate: step 5/5. Functionally, catalyzes the reversible isomerization-deamination of glucosamine 6-phosphate (GlcN6P) to form fructose 6-phosphate (Fru6P) and ammonium ion. The sequence is that of Glucosamine-6-phosphate deaminase from Enterococcus faecalis (strain ATCC 700802 / V583).